Here is a 287-residue protein sequence, read N- to C-terminus: Ribosomal RNA small subunit methyltransferase I (287 aa).

Belongs to the methyltransferase superfamily. RsmI family.

It is found in the cytoplasm. The catalysed reaction is cytidine(1402) in 16S rRNA + S-adenosyl-L-methionine = 2'-O-methylcytidine(1402) in 16S rRNA + S-adenosyl-L-homocysteine + H(+). Catalyzes the 2'-O-methylation of the ribose of cytidine 1402 (C1402) in 16S rRNA. This Streptococcus pyogenes serotype M18 (strain MGAS8232) protein is Ribosomal RNA small subunit methyltransferase I.